The sequence spans 238 residues: MTTSAVKVLIHGASGRMGKALLRLAAEDQTLQVVGAVVGRSPSQRVVDGVPFFAASELGGAPAFDVAIDFSLPQGFAPILALCAQRGKPLVSGTTGLDEAQRAALRDAAQQIALVWASNFSLGVAVLTELVERAAGTLPGWDCDILEAHHVHKQDAPSGTALTLGEAATGSGAQPRYVSLRAGDIVGEHTVQFTGLGERVELVHRATNRDIFARGALHAAKLLIGKPAGSYRVRDLVL.

12–17 (GASGRM) lines the NAD(+) pocket. Arginine 40 contacts NADP(+). NAD(+)-binding positions include 93 to 95 (GTT) and 117 to 120 (ASNF). The active-site Proton donor/acceptor is histidine 149. A (S)-2,3,4,5-tetrahydrodipicolinate-binding site is contributed by histidine 150. Catalysis depends on lysine 153, which acts as the Proton donor. 159 to 160 (GT) contacts (S)-2,3,4,5-tetrahydrodipicolinate.

Belongs to the DapB family.

Its subcellular location is the cytoplasm. The catalysed reaction is (S)-2,3,4,5-tetrahydrodipicolinate + NAD(+) + H2O = (2S,4S)-4-hydroxy-2,3,4,5-tetrahydrodipicolinate + NADH + H(+). It carries out the reaction (S)-2,3,4,5-tetrahydrodipicolinate + NADP(+) + H2O = (2S,4S)-4-hydroxy-2,3,4,5-tetrahydrodipicolinate + NADPH + H(+). Its pathway is amino-acid biosynthesis; L-lysine biosynthesis via DAP pathway; (S)-tetrahydrodipicolinate from L-aspartate: step 4/4. In terms of biological role, catalyzes the conversion of 4-hydroxy-tetrahydrodipicolinate (HTPA) to tetrahydrodipicolinate. This Xanthomonas euvesicatoria pv. vesicatoria (strain 85-10) (Xanthomonas campestris pv. vesicatoria) protein is 4-hydroxy-tetrahydrodipicolinate reductase.